Consider the following 180-residue polypeptide: ATP synthase subunit delta (180 aa).

This sequence belongs to the ATPase delta chain family. As to quaternary structure, F-type ATPases have 2 components, F(1) - the catalytic core - and F(0) - the membrane proton channel. F(1) has five subunits: alpha(3), beta(3), gamma(1), delta(1), epsilon(1). F(0) has three main subunits: a(1), b(2) and c(10-14). The alpha and beta chains form an alternating ring which encloses part of the gamma chain. F(1) is attached to F(0) by a central stalk formed by the gamma and epsilon chains, while a peripheral stalk is formed by the delta and b chains.

It is found in the cell membrane. Functionally, f(1)F(0) ATP synthase produces ATP from ADP in the presence of a proton or sodium gradient. F-type ATPases consist of two structural domains, F(1) containing the extramembraneous catalytic core and F(0) containing the membrane proton channel, linked together by a central stalk and a peripheral stalk. During catalysis, ATP synthesis in the catalytic domain of F(1) is coupled via a rotary mechanism of the central stalk subunits to proton translocation. Its function is as follows. This protein is part of the stalk that links CF(0) to CF(1). It either transmits conformational changes from CF(0) to CF(1) or is implicated in proton conduction. The chain is ATP synthase subunit delta from Ligilactobacillus salivarius (strain UCC118) (Lactobacillus salivarius).